A 146-amino-acid chain; its full sequence is Large ribosomal subunit protein uL23m (146 aa).

The segment at 108 to 146 (PDLFPEKEPTSPDPLEEELPQQRQSSDPRCPGIPSWFGL) is disordered.

This sequence belongs to the universal ribosomal protein uL23 family. Component of the mitochondrial ribosome large subunit (39S) which comprises a 16S rRNA and about 50 distinct proteins.

It localises to the mitochondrion. This chain is Large ribosomal subunit protein uL23m (Mrpl23), found in Rattus norvegicus (Rat).